The sequence spans 156 residues: Small ribosomal subunit protein uS7 (156 aa).

This sequence belongs to the universal ribosomal protein uS7 family. In terms of assembly, part of the 30S ribosomal subunit. Contacts proteins S9 and S11.

Functionally, one of the primary rRNA binding proteins, it binds directly to 16S rRNA where it nucleates assembly of the head domain of the 30S subunit. Is located at the subunit interface close to the decoding center, probably blocks exit of the E-site tRNA. In Beutenbergia cavernae (strain ATCC BAA-8 / DSM 12333 / CCUG 43141 / JCM 11478 / NBRC 16432 / NCIMB 13614 / HKI 0122), this protein is Small ribosomal subunit protein uS7.